The sequence spans 97 residues: Large ribosomal subunit protein bL28 (97 aa).

The protein belongs to the bacterial ribosomal protein bL28 family.

This chain is Large ribosomal subunit protein bL28, found in Brucella abortus (strain S19).